The following is a 378-amino-acid chain: Erythronate-4-phosphate dehydrogenase (378 aa).

Residues S45 and T66 each contribute to the substrate site. 2 residues coordinate NAD(+): D146 and T175. Residue R208 is part of the active site. An NAD(+)-binding site is contributed by D232. E237 is a catalytic residue. The Proton donor role is filled by H254. Residue G257 coordinates NAD(+). Y258 serves as a coordination point for substrate.

This sequence belongs to the D-isomer specific 2-hydroxyacid dehydrogenase family. PdxB subfamily. As to quaternary structure, homodimer.

The protein localises to the cytoplasm. The catalysed reaction is 4-phospho-D-erythronate + NAD(+) = (R)-3-hydroxy-2-oxo-4-phosphooxybutanoate + NADH + H(+). The protein operates within cofactor biosynthesis; pyridoxine 5'-phosphate biosynthesis; pyridoxine 5'-phosphate from D-erythrose 4-phosphate: step 2/5. Catalyzes the oxidation of erythronate-4-phosphate to 3-hydroxy-2-oxo-4-phosphonooxybutanoate. This is Erythronate-4-phosphate dehydrogenase from Escherichia coli (strain K12 / MC4100 / BW2952).